The sequence spans 1568 residues: Pentafunctional AROM polypeptide (1568 aa).

Positions 1 to 380 are 3-dehydroquinate synthase; it reads MSQVEKVSIL…YQLKAHEVSK (380 aa). NAD(+) is bound by residues 43–45, 81–84, 112–114, and Asp-117; these read DSN, ENNK, and GGV. Arg-128 serves as a coordination point for 7-phospho-2-dehydro-3-deoxy-D-arabino-heptonate. 137–138 serves as a coordination point for NAD(+); sequence TT. The 7-phospho-2-dehydro-3-deoxy-D-arabino-heptonate site is built by Asp-144 and Lys-150. Lys-159 is an NAD(+) binding site. Asn-160 contributes to the 7-phospho-2-dehydro-3-deoxy-D-arabino-heptonate binding site. NAD(+) is bound by residues 177 to 180 and Asn-188; that span reads FLTT. Glu-192 serves as a coordination point for Zn(2+). 7-phospho-2-dehydro-3-deoxy-D-arabino-heptonate contacts are provided by residues 192–195 and Lys-244; that span reads EVVK. The Proton acceptor; for 3-dehydroquinate synthase activity role is filled by Glu-254. 7-phospho-2-dehydro-3-deoxy-D-arabino-heptonate-binding positions include 258–262 and His-265; that span reads RNLLN. Zn(2+) is bound at residue His-265. His-269 serves as the catalytic Proton acceptor; for 3-dehydroquinate synthase activity. 7-phospho-2-dehydro-3-deoxy-D-arabino-heptonate is bound by residues His-281 and Lys-352. His-281 contacts Zn(2+). Residues 393 to 842 form an EPSP synthase region; sequence VHPFQEETTP…WDVLHTKFGV (450 aa). Cys-824 functions as the For EPSP synthase activity in the catalytic mechanism. The tract at residues 867 to 1056 is shikimate kinase; the sequence is DKSIVVIGMR…VPKGRSFVLS (190 aa). 874–881 serves as a coordination point for ATP; it reads GMRAAGKS. A 3-dehydroquinase region spans residues 1057-1267; it reads LACSDLNDIA…SGNGQLTVGE (211 aa). Positions 1280-1568 are shikimate dehydrogenase; that stretch reads RRNFYIVGNP…VYEAVVDDNV (289 aa).

The protein in the N-terminal section; belongs to the sugar phosphate cyclases superfamily. Dehydroquinate synthase family. It in the 2nd section; belongs to the EPSP synthase family. This sequence in the 3rd section; belongs to the shikimate kinase family. In the 4th section; belongs to the type-I 3-dehydroquinase family. The protein in the C-terminal section; belongs to the shikimate dehydrogenase family. Homodimer. Zn(2+) is required as a cofactor.

The protein localises to the cytoplasm. The catalysed reaction is 7-phospho-2-dehydro-3-deoxy-D-arabino-heptonate = 3-dehydroquinate + phosphate. It carries out the reaction 3-dehydroquinate = 3-dehydroshikimate + H2O. The enzyme catalyses shikimate + NADP(+) = 3-dehydroshikimate + NADPH + H(+). It catalyses the reaction shikimate + ATP = 3-phosphoshikimate + ADP + H(+). The catalysed reaction is 3-phosphoshikimate + phosphoenolpyruvate = 5-O-(1-carboxyvinyl)-3-phosphoshikimate + phosphate. It functions in the pathway metabolic intermediate biosynthesis; chorismate biosynthesis; chorismate from D-erythrose 4-phosphate and phosphoenolpyruvate: step 2/7. Its pathway is metabolic intermediate biosynthesis; chorismate biosynthesis; chorismate from D-erythrose 4-phosphate and phosphoenolpyruvate: step 3/7. It participates in metabolic intermediate biosynthesis; chorismate biosynthesis; chorismate from D-erythrose 4-phosphate and phosphoenolpyruvate: step 4/7. The protein operates within metabolic intermediate biosynthesis; chorismate biosynthesis; chorismate from D-erythrose 4-phosphate and phosphoenolpyruvate: step 5/7. It functions in the pathway metabolic intermediate biosynthesis; chorismate biosynthesis; chorismate from D-erythrose 4-phosphate and phosphoenolpyruvate: step 6/7. Functionally, the AROM polypeptide catalyzes 5 consecutive enzymatic reactions in prechorismate polyaromatic amino acid biosynthesis. In Clavispora lusitaniae (strain ATCC 42720) (Yeast), this protein is Pentafunctional AROM polypeptide.